Consider the following 51-residue polypeptide: Sperm protamine P1 (51 aa).

2 disulfide bridges follow: Cys-7–Cys-15 and Cys-40–Cys-48.

It belongs to the protamine P1 family. Cross-linked by interchain disulfide bonds around the DNA-helix. Post-translationally, phosphorylated by SRPK1. Testis.

Its subcellular location is the nucleus. It is found in the chromosome. Protamines substitute for histones in the chromatin of sperm during the haploid phase of spermatogenesis. They compact sperm DNA into a highly condensed, stable and inactive complex. This chain is Sperm protamine P1 (PRM1), found in Bos taurus (Bovine).